Consider the following 361-residue polypeptide: D-alanine--D-alanine ligase (361 aa).

One can recognise an ATP-grasp domain in the interval Lys134–Asp344. Residue Lys167 to Glu222 coordinates ATP. 3 residues coordinate Mg(2+): Asp297, Glu311, and Asn313.

This sequence belongs to the D-alanine--D-alanine ligase family. The cofactor is Mg(2+). Mn(2+) is required as a cofactor.

It localises to the cytoplasm. The catalysed reaction is 2 D-alanine + ATP = D-alanyl-D-alanine + ADP + phosphate + H(+). It functions in the pathway cell wall biogenesis; peptidoglycan biosynthesis. Functionally, cell wall formation. In Borreliella burgdorferi (strain ATCC 35210 / DSM 4680 / CIP 102532 / B31) (Borrelia burgdorferi), this protein is D-alanine--D-alanine ligase.